Consider the following 351-residue polypeptide: Phosphoribosylformylglycinamidine cyclo-ligase (351 aa).

This sequence belongs to the AIR synthase family.

It localises to the cytoplasm. It catalyses the reaction 2-formamido-N(1)-(5-O-phospho-beta-D-ribosyl)acetamidine + ATP = 5-amino-1-(5-phospho-beta-D-ribosyl)imidazole + ADP + phosphate + H(+). The protein operates within purine metabolism; IMP biosynthesis via de novo pathway; 5-amino-1-(5-phospho-D-ribosyl)imidazole from N(2)-formyl-N(1)-(5-phospho-D-ribosyl)glycinamide: step 2/2. The chain is Phosphoribosylformylglycinamidine cyclo-ligase from Lysinibacillus sphaericus (strain C3-41).